Consider the following 562-residue polypeptide: Proton channel OTOP2 (562 aa).

Positions 1–20 (MSEELAQGPKESPPAPRAGP) are disordered. 12 consecutive transmembrane segments (helical) span residues 30 to 50 (LLSV…ISGG), 62 to 82 (VFAL…FYLL), 100 to 120 (PIWL…MDVF), 137 to 157 (ILHP…LWVS), 169 to 189 (TWCG…AAVV), 241 to 261 (FYLY…LYVM), 289 to 309 (FFAG…VFII), 324 to 344 (ALVI…LVSL), 371 to 391 (LLMG…VAVV), 402 to 422 (LNLT…MFII), 495 to 515 (DISL…AFGA), and 527 to 547 (FYGY…GIFY).

Belongs to the otopetrin family.

Its subcellular location is the cell membrane. The enzyme catalyses H(+)(in) = H(+)(out). Actives at neutral and alkaline extracellular pH, acid extracellular pH appears to inhibit the channel. Insensitive to activation by Zn(2+). Proton-selective ion channel open at neutral pH. Actives at neutral and alkaline extracellular pH, likely participates in some alkali-related physiological activities. This Homo sapiens (Human) protein is Proton channel OTOP2.